The following is a 212-amino-acid chain: Large ribosomal subunit protein uL4 (212 aa).

The span at 43–52 shows a compositional bias: polar residues; it reads NNRQGTASTK. The segment at 43–77 is disordered; sequence NNRQGTASTKTRSEVRGGGRKPWRQKGTGRARAGS. Residues 60–71 show a composition bias toward basic residues; the sequence is GGRKPWRQKGTG.

The protein belongs to the universal ribosomal protein uL4 family. Part of the 50S ribosomal subunit.

Its function is as follows. One of the primary rRNA binding proteins, this protein initially binds near the 5'-end of the 23S rRNA. It is important during the early stages of 50S assembly. It makes multiple contacts with different domains of the 23S rRNA in the assembled 50S subunit and ribosome. Functionally, forms part of the polypeptide exit tunnel. In Trichodesmium erythraeum (strain IMS101), this protein is Large ribosomal subunit protein uL4.